The chain runs to 40 residues: Snaclec tokaracetin subunit alpha (40 aa).

A C-type lectin domain is found at 1 to 40 (DCPSGWSSFKQYCYKPFKQLKTWEDAERFCLEQVKGAHLV). The cysteines at positions 2 and 13 are disulfide-linked.

Belongs to the snaclec family. Heterodimer of subunits alpha and beta; disulfide-linked. Expressed by the venom gland.

Its subcellular location is the secreted. In terms of biological role, platelet antagonist that specifically and reversibly binds to a site on platelet glycoprotein Ibalpha (GP1BA) close to or identical with the site for vWF binding. It inhibits the binding of vWF to platelets and vWF-dependent shear-induced platelet aggregation. This Protobothrops tokarensis (Tokara habu) protein is Snaclec tokaracetin subunit alpha.